Consider the following 463-residue polypeptide: L-seryl-tRNA(Sec) selenium transferase (463 aa).

Lysine 295 carries the post-translational modification N6-(pyridoxal phosphate)lysine.

This sequence belongs to the SelA family. As to quaternary structure, homodecamer; pentamer of dimers. Binds only one seryl-tRNA(Sec) per dimer. Requires pyridoxal 5'-phosphate as cofactor.

Its subcellular location is the cytoplasm. The enzyme catalyses L-seryl-tRNA(Sec) + selenophosphate + H(+) = L-selenocysteinyl-tRNA(Sec) + phosphate. The protein operates within aminoacyl-tRNA biosynthesis; selenocysteinyl-tRNA(Sec) biosynthesis; selenocysteinyl-tRNA(Sec) from L-seryl-tRNA(Sec) (bacterial route): step 1/1. In terms of biological role, converts seryl-tRNA(Sec) to selenocysteinyl-tRNA(Sec) required for selenoprotein biosynthesis. This is L-seryl-tRNA(Sec) selenium transferase from Escherichia coli O81 (strain ED1a).